The following is a 141-amino-acid chain: Hemoglobin subunit alpha (141 aa).

In terms of domain architecture, Globin spans valine 1 to arginine 141. Serine 3 bears the Phosphoserine mark. Lysine 7 carries the N6-succinyllysine modification. Threonine 8 is subject to Phosphothreonine. N6-succinyllysine is present on lysine 11. Residue lysine 16 is modified to N6-acetyllysine; alternate. Lysine 16 bears the N6-succinyllysine; alternate mark. Tyrosine 24 carries the post-translational modification Phosphotyrosine. The residue at position 35 (serine 35) is a Phosphoserine. Lysine 40 carries the N6-succinyllysine modification. Phosphoserine is present on serine 49. O2 is bound at residue histidine 58. Histidine 87 is a heme b binding site. Serine 102 bears the Phosphoserine mark. A Phosphothreonine modification is found at threonine 108. Serine 124 is modified (phosphoserine). A phosphothreonine mark is found at threonine 134 and threonine 137. Serine 138 carries the post-translational modification Phosphoserine.

Belongs to the globin family. Heterotetramer of two alpha chains and two beta chains. Red blood cells.

Involved in oxygen transport from the lung to the various peripheral tissues. In terms of biological role, hemopressin acts as an antagonist peptide of the cannabinoid receptor CNR1. Hemopressin-binding efficiently blocks cannabinoid receptor CNR1 and subsequent signaling. The polypeptide is Hemoglobin subunit alpha (HBA) (Canis lupus familiaris (Dog)).